The chain runs to 679 residues: MTKDLLLELGLEELPAYVVTPSEKQLGQKMVKFLEDHRLSFETVQTFSTPRRLAVRVKGLADQQTDLTEDFKGPSKKIALDAEGNFSKAAQGFVRGKGLSVDDIEFREVKGEEYVYVTKHETGKSAIDVLASVTEVLTELTFPVNMHWANNSFEYIRPVHTLVVLLDDQALELDFLDIHSGRISRGHRFLGSDTEILSASSYEDDLRQQFVIADAKERQQMIVDQIHAIEEKENISVEIDEDLLNEVLNLVEYPTAFLGSFDEKYLDVPEEVLVTSMKNHQRYFVVRDRDGKLLPNFISVRNGNAEHIENVIKGNEKVLVARLEDGEFFWQEDQKLNIADLVEKLKQVTFHEKIGSLYEHMDRVKVISQYLAEKADLSDEEKLAVLRAASIYKFDLLTGMVDEFDELQGIMGEKYALLAGEQPAVAAAIREHYMPTSADGELPETRVGAILALADKFDTLLSFFSVGLIPSGSNDPYALRRATQGIVRILEAFGWDIPLDELVTNLYGLSFASLDYANQKEVMAFISARIEKMIGSKVPKDIREAVLESDTYIVSLILEASQALVQKSKDAQYKVSIESLSRAFNLAEKVTHSVSVDYSLFENNQEKALYQAILSLELTEDMHDNLDKLFALSPIINDFFDNTMVMTDDEKMKQNRLALLNSLVAKARTVAAFNLLNTK.

The protein belongs to the class-II aminoacyl-tRNA synthetase family. Tetramer of two alpha and two beta subunits.

It is found in the cytoplasm. It catalyses the reaction tRNA(Gly) + glycine + ATP = glycyl-tRNA(Gly) + AMP + diphosphate. The protein is Glycine--tRNA ligase beta subunit of Streptococcus agalactiae serotype III (strain NEM316).